The sequence spans 62 residues: Small ribosomal subunit protein eS30z/eS30y/eS30x (62 aa).

A disordered region spans residues 1 to 38 (MGKVHGSLARAGKVRGQTPKVAKQDKKKKPRGRAHKRL). Over residues 25–38 (DKKKKPRGRAHKRL) the composition is skewed to basic residues.

This sequence belongs to the eukaryotic ribosomal protein eS30 family.

This chain is Small ribosomal subunit protein eS30z/eS30y/eS30x (RPS30A), found in Arabidopsis thaliana (Mouse-ear cress).